Here is a 369-residue protein sequence, read N- to C-terminus: Flagellar P-ring protein (369 aa).

The signal sequence occupies residues 1 to 22 (MIKLKQLIAATLLLSTAFGVHA).

The protein belongs to the FlgI family. As to quaternary structure, the basal body constitutes a major portion of the flagellar organelle and consists of four rings (L,P,S, and M) mounted on a central rod.

It is found in the periplasm. Its subcellular location is the bacterial flagellum basal body. Assembles around the rod to form the L-ring and probably protects the motor/basal body from shearing forces during rotation. In Pseudomonas savastanoi pv. phaseolicola (strain 1448A / Race 6) (Pseudomonas syringae pv. phaseolicola (strain 1448A / Race 6)), this protein is Flagellar P-ring protein.